The sequence spans 292 residues: High-affinity heme uptake system protein IsdE (292 aa).

The N-terminal stretch at 1–19 is a signal peptide; sequence MRIIKYLTILVISVVILTS. Cysteine 20 carries N-palmitoyl cysteine lipidation. A lipid anchor (S-diacylglycerol cysteine) is attached at cysteine 20. The region spanning 35 to 291 is the Fe/B12 periplasmic-binding domain; the sequence is RIVPTTVALT…QLYDLFYKDK (257 aa). Heme contacts are provided by valine 41, alanine 42, serine 60, tyrosine 61, methionine 78, and histidine 229.

Belongs to the bacterial solute-binding protein 8 family. Heme b serves as cofactor.

Its subcellular location is the cell membrane. Functionally, involved in heme (porphyrin) scavenging. Binds Fe(2+) and Fe(3+) heme but the largest fraction is Fe(2+) heme. Functions as a high-affinity heme binding protein and probably has a role in relaying heme-iron from cell wall-anchored isd proteins receptors to the probable permease IsdF. The protein is High-affinity heme uptake system protein IsdE (isdE) of Staphylococcus aureus (strain Mu3 / ATCC 700698).